Reading from the N-terminus, the 333-residue chain is D-fructose 1,6-bisphosphatase class 2/sedoheptulose 1,7-bisphosphatase (333 aa).

Residues aspartate 33, glutamate 57, aspartate 85, and glutamate 88 each contribute to the Mn(2+) site. Substrate contacts are provided by residues 88-90 (EGT), tyrosine 119, 164-166 (RAR), and 186-188 (DGD). Glutamate 213 provides a ligand contact to Mn(2+).

It belongs to the FBPase class 2 family. In terms of assembly, homotetramer. It depends on Mn(2+) as a cofactor.

It carries out the reaction beta-D-fructose 1,6-bisphosphate + H2O = beta-D-fructose 6-phosphate + phosphate. The enzyme catalyses D-sedoheptulose 1,7-bisphosphate + H2O = D-sedoheptulose 7-phosphate + phosphate. It functions in the pathway carbohydrate biosynthesis; Calvin cycle. Catalyzes the hydrolysis of fructose 1,6-bisphosphate (Fru 1,6-P2) and sedoheptulose 1,7-bisphosphate (Sed 1,7-P2) to fructose 6-phosphate and sedoheptulose 7-phosphate, respectively. The protein is D-fructose 1,6-bisphosphatase class 2/sedoheptulose 1,7-bisphosphatase of Prochlorococcus marinus (strain MIT 9515).